Consider the following 151-residue polypeptide: MRIKLVAVGRLREEAYERACAEYARRLAAYARLELVEVRDARIADSRAGLLKEGQALLDQLHPGEHAVLLDSGGKQFTSVELADWLENHTVQEPVFIVGSSHGVAPMVRERAQMVWSLSKLTFPHELARVIVLEQLYRAVTILAGHPYHHG.

S-adenosyl-L-methionine-binding positions include L70, G99, and 118-123 (LSKLTF).

The protein belongs to the RNA methyltransferase RlmH family. Homodimer.

It is found in the cytoplasm. The catalysed reaction is pseudouridine(1915) in 23S rRNA + S-adenosyl-L-methionine = N(3)-methylpseudouridine(1915) in 23S rRNA + S-adenosyl-L-homocysteine + H(+). Functionally, specifically methylates the pseudouridine at position 1915 (m3Psi1915) in 23S rRNA. The sequence is that of Ribosomal RNA large subunit methyltransferase H from Gloeobacter violaceus (strain ATCC 29082 / PCC 7421).